A 146-amino-acid polypeptide reads, in one-letter code: Large ribosomal subunit protein uL15 (146 aa).

Over residues 1–13 (MKLHELRPAEGSK) the composition is skewed to basic and acidic residues. The interval 1–54 (MKLHELRPAEGSKKAPKRVGRGNGSGLGKTAGKGHKGQNARSGGGVRPGFEGGQ) is disordered. Gly residues-rich tracts occupy residues 21 to 31 (RGNGSGLGKTA) and 42 to 52 (SGGGVRPGFEG).

It belongs to the universal ribosomal protein uL15 family. In terms of assembly, part of the 50S ribosomal subunit.

Functionally, binds to the 23S rRNA. The protein is Large ribosomal subunit protein uL15 of Clostridium novyi (strain NT).